A 329-amino-acid polypeptide reads, in one-letter code: Ketol-acid reductoisomerase (NADP(+)) (329 aa).

Residues 2–182 (TQLFYDTDAD…GGTRAGILET (181 aa)) enclose the KARI N-terminal Rossmann domain. Residues 25–28 (YGSQ), S51, S53, and 83–86 (DEFQ) contribute to the NADP(+) site. H108 is a catalytic residue. G134 serves as a coordination point for NADP(+). Residues 183 to 328 (NFKEETETDL…KGLRAMFSWL (146 aa)) form the KARI C-terminal knotted domain. The Mg(2+) site is built by D191, E195, E227, and E231. Substrate is bound at residue S252.

This sequence belongs to the ketol-acid reductoisomerase family. Mg(2+) serves as cofactor.

The catalysed reaction is (2R)-2,3-dihydroxy-3-methylbutanoate + NADP(+) = (2S)-2-acetolactate + NADPH + H(+). It carries out the reaction (2R,3R)-2,3-dihydroxy-3-methylpentanoate + NADP(+) = (S)-2-ethyl-2-hydroxy-3-oxobutanoate + NADPH + H(+). Its pathway is amino-acid biosynthesis; L-isoleucine biosynthesis; L-isoleucine from 2-oxobutanoate: step 2/4. It functions in the pathway amino-acid biosynthesis; L-valine biosynthesis; L-valine from pyruvate: step 2/4. Its function is as follows. Involved in the biosynthesis of branched-chain amino acids (BCAA). Catalyzes an alkyl-migration followed by a ketol-acid reduction of (S)-2-acetolactate (S2AL) to yield (R)-2,3-dihydroxy-isovalerate. In the isomerase reaction, S2AL is rearranged via a Mg-dependent methyl migration to produce 3-hydroxy-3-methyl-2-ketobutyrate (HMKB). In the reductase reaction, this 2-ketoacid undergoes a metal-dependent reduction by NADPH to yield (R)-2,3-dihydroxy-isovalerate. The protein is Ketol-acid reductoisomerase (NADP(+)) of Prochlorococcus marinus (strain MIT 9515).